The primary structure comprises 325 residues: NADH-quinone oxidoreductase subunit H (325 aa).

8 helical membrane passes run 5-25, 75-95, 117-137, 157-177, 190-210, 240-260, 268-288, and 305-325; these read LIIILIKSAVVILLLFTAAAY, FVYWLAPGISLFTALFIFVLI, VGVVFLLAFSSLAVYGVVLAG, ISYEIPMGLSLLTVVLSTGTL, WLIWTNPISFIIYFITSFAET, FFLGEYINILAVSAIATTLFF, DIPILWFGLKVAIFVFIFMWV, and WKVLIPIAILNLIITAYFTLV.

It belongs to the complex I subunit 1 family. As to quaternary structure, NDH-1 is composed of 14 different subunits. Subunits NuoA, H, J, K, L, M, N constitute the membrane sector of the complex.

The protein resides in the cell inner membrane. The enzyme catalyses a quinone + NADH + 5 H(+)(in) = a quinol + NAD(+) + 4 H(+)(out). Functionally, NDH-1 shuttles electrons from NADH, via FMN and iron-sulfur (Fe-S) centers, to quinones in the respiratory chain. The immediate electron acceptor for the enzyme in this species is believed to be ubiquinone. Couples the redox reaction to proton translocation (for every two electrons transferred, four hydrogen ions are translocated across the cytoplasmic membrane), and thus conserves the redox energy in a proton gradient. This subunit may bind ubiquinone. The chain is NADH-quinone oxidoreductase subunit H from Protochlamydia amoebophila (strain UWE25).